The sequence spans 461 residues: Cysteine--tRNA ligase (461 aa).

Residue C29 participates in Zn(2+) binding. The 'HIGH' region motif lies at 31–41 (MTVYDFCHIGH). Positions 210, 235, and 239 each coordinate Zn(2+). Positions 267–271 (KMSKS) match the 'KMSKS' region motif. K270 is an ATP binding site.

This sequence belongs to the class-I aminoacyl-tRNA synthetase family. In terms of assembly, monomer. It depends on Zn(2+) as a cofactor.

The protein localises to the cytoplasm. It catalyses the reaction tRNA(Cys) + L-cysteine + ATP = L-cysteinyl-tRNA(Cys) + AMP + diphosphate. The sequence is that of Cysteine--tRNA ligase from Stutzerimonas stutzeri (strain A1501) (Pseudomonas stutzeri).